The chain runs to 209 residues: Glycerol-3-phosphate acyltransferase (209 aa).

Helical transmembrane passes span 13–33, 63–83, 94–114, 127–147, and 151–171; these read ALIA…GLLL, LAAA…LIAQ, PGLL…WLGF, LLGI…SIAF, and YSSL…WILG.

It belongs to the PlsY family. Probably interacts with PlsX.

The protein resides in the cell inner membrane. It carries out the reaction an acyl phosphate + sn-glycerol 3-phosphate = a 1-acyl-sn-glycero-3-phosphate + phosphate. It participates in lipid metabolism; phospholipid metabolism. Catalyzes the transfer of an acyl group from acyl-phosphate (acyl-PO(4)) to glycerol-3-phosphate (G3P) to form lysophosphatidic acid (LPA). This enzyme utilizes acyl-phosphate as fatty acyl donor, but not acyl-CoA or acyl-ACP. The polypeptide is Glycerol-3-phosphate acyltransferase (Allorhizobium ampelinum (strain ATCC BAA-846 / DSM 112012 / S4) (Agrobacterium vitis (strain S4))).